We begin with the raw amino-acid sequence, 355 residues long: UDP-N-acetylglucosamine--N-acetylmuramyl-(pentapeptide) pyrophosphoryl-undecaprenol N-acetylglucosamine transferase (355 aa).

UDP-N-acetyl-alpha-D-glucosamine-binding positions include Thr-15–Gly-17, Asn-127, Arg-163, Ser-191, Ile-244, Ala-263–Glu-268, and Gln-288.

Belongs to the glycosyltransferase 28 family. MurG subfamily.

The protein resides in the cell inner membrane. The catalysed reaction is di-trans,octa-cis-undecaprenyl diphospho-N-acetyl-alpha-D-muramoyl-L-alanyl-D-glutamyl-meso-2,6-diaminopimeloyl-D-alanyl-D-alanine + UDP-N-acetyl-alpha-D-glucosamine = di-trans,octa-cis-undecaprenyl diphospho-[N-acetyl-alpha-D-glucosaminyl-(1-&gt;4)]-N-acetyl-alpha-D-muramoyl-L-alanyl-D-glutamyl-meso-2,6-diaminopimeloyl-D-alanyl-D-alanine + UDP + H(+). The protein operates within cell wall biogenesis; peptidoglycan biosynthesis. Its function is as follows. Cell wall formation. Catalyzes the transfer of a GlcNAc subunit on undecaprenyl-pyrophosphoryl-MurNAc-pentapeptide (lipid intermediate I) to form undecaprenyl-pyrophosphoryl-MurNAc-(pentapeptide)GlcNAc (lipid intermediate II). This chain is UDP-N-acetylglucosamine--N-acetylmuramyl-(pentapeptide) pyrophosphoryl-undecaprenol N-acetylglucosamine transferase, found in Salmonella enteritidis PT4 (strain P125109).